A 271-amino-acid chain; its full sequence is NADPH-dependent 7-cyano-7-deazaguanine reductase (271 aa).

Residue 79-81 (IES) participates in substrate binding. 81–82 (SK) lines the NADPH pocket. Cysteine 178 serves as the catalytic Thioimide intermediate. Aspartate 185 (proton donor) is an active-site residue. Position 217–218 (217–218 (HE)) interacts with substrate. NADPH is bound at residue 246–247 (RG).

The protein belongs to the GTP cyclohydrolase I family. QueF type 2 subfamily. In terms of assembly, homodimer.

It is found in the cytoplasm. It catalyses the reaction 7-aminomethyl-7-carbaguanine + 2 NADP(+) = 7-cyano-7-deazaguanine + 2 NADPH + 3 H(+). The protein operates within tRNA modification; tRNA-queuosine biosynthesis. In terms of biological role, catalyzes the NADPH-dependent reduction of 7-cyano-7-deazaguanine (preQ0) to 7-aminomethyl-7-deazaguanine (preQ1). This is NADPH-dependent 7-cyano-7-deazaguanine reductase from Acinetobacter baylyi (strain ATCC 33305 / BD413 / ADP1).